The primary structure comprises 156 residues: Transcription elongation factor GreA 1 (156 aa).

Positions 43–74 (RSENAEYSSAKRDLGRLESRLRYLNKQLQYAQ) form a coiled coil.

This sequence belongs to the GreA/GreB family.

In terms of biological role, necessary for efficient RNA polymerase transcription elongation past template-encoded arresting sites. The arresting sites in DNA have the property of trapping a certain fraction of elongating RNA polymerases that pass through, resulting in locked ternary complexes. Cleavage of the nascent transcript by cleavage factors such as GreA or GreB allows the resumption of elongation from the new 3'terminus. GreA releases sequences of 2 to 3 nucleotides. The polypeptide is Transcription elongation factor GreA 1 (Lactiplantibacillus plantarum (strain ATCC BAA-793 / NCIMB 8826 / WCFS1) (Lactobacillus plantarum)).